Here is an 89-residue protein sequence, read N- to C-terminus: Small ribosomal subunit protein uS15 (89 aa).

The protein belongs to the universal ribosomal protein uS15 family. In terms of assembly, part of the 30S ribosomal subunit. Forms a bridge to the 50S subunit in the 70S ribosome, contacting the 23S rRNA.

Functionally, one of the primary rRNA binding proteins, it binds directly to 16S rRNA where it helps nucleate assembly of the platform of the 30S subunit by binding and bridging several RNA helices of the 16S rRNA. Its function is as follows. Forms an intersubunit bridge (bridge B4) with the 23S rRNA of the 50S subunit in the ribosome. The sequence is that of Small ribosomal subunit protein uS15 from Anoxybacillus flavithermus (strain DSM 21510 / WK1).